A 45-amino-acid chain; its full sequence is Thymosin beta-15A homolog (45 aa).

The segment at 19 to 45 is disordered; it reads KKTNTEEKNTLPSKETIEQEKECVKSS. The span at 21–45 shows a compositional bias: basic and acidic residues; the sequence is TNTEEKNTLPSKETIEQEKECVKSS.

It belongs to the thymosin beta family.

Its subcellular location is the cytoplasm. The protein resides in the cytoskeleton. In terms of biological role, plays an important role in the organization of the cytoskeleton. Binds to and sequesters actin monomers (G actin) and therefore inhibits actin polymerization. This is Thymosin beta-15A homolog from Coturnix japonica (Japanese quail).